Reading from the N-terminus, the 158-residue chain is Snaclec alboaggregin-D subunit alpha (158 aa).

A signal peptide spans 1–23 (MGRFIFGSFGLLVVFLSLSGTGA). 3 disulfide bridges follow: Cys27–Cys38, Cys55–Cys152, and Cys127–Cys144. Residues 34–153 (YDRYCYQAFS…CAELNPFICK (120 aa)) enclose the C-type lectin domain.

The protein belongs to the snaclec family. In terms of assembly, tetramer of heterodimers of alpha and beta subunits (alphabeta)(4); disulfide-linked. Expressed by the venom gland.

The protein resides in the secreted. Snaclec that induces human platelet aggregation in the absence of any cofactor with the EC(50) of 0.25 nM and causes tyrosine phosphorylation in human platelets. Antibodies against either platelet GPIbalpha (GP1BA) or GPVI (GP6) inhibit alboaggregin D-induced platelet aggregation. Only the combination of these two antibodies completely inhibit aggregation, suggesting that it acts through both GPIbalpha (GP1BA) and GPVI (GP6). The sequence is that of Snaclec alboaggregin-D subunit alpha from Trimeresurus albolabris (White-lipped pit viper).